The sequence spans 536 residues: Nucleosome assembly protein 1-like 3 (536 aa).

Disordered regions lie at residues 1–104 and 160–338; these read MAEA…DKLP and PTEE…KEDP. Residues 35 to 75 show a composition bias toward low complexity; sequence SNSSSSTTSCGSTGSSSSSSSSSSSSSSSSSGSSGSSSNGS. Residues 77-95 show a composition bias toward basic residues; it reads LHQKKRVPGPSRRAQRRPS. The span at 160–184 shows a compositional bias: acidic residues; the sequence is PTEEECEWNSEEEFSGDEEMQDDTP. 2 stretches are compositionally biased toward basic and acidic residues: residues 199–220 and 227–269; these read GKEN…PEAK and PKET…KTDS. A compositionally biased stretch (polar residues) spans 287–300; it reads TQANAEYTDQPTED. Over residues 306-324 the composition is skewed to basic and acidic residues; the sequence is PVREAQKRVPETRPEERVN.

It belongs to the nucleosome assembly protein (NAP) family.

Its subcellular location is the nucleus. The sequence is that of Nucleosome assembly protein 1-like 3 (Nap1l3) from Rattus norvegicus (Rat).